A 744-amino-acid polypeptide reads, in one-letter code: Dolasta-1(15),8-diene synthase (744 aa).

The terpene cyclase stretch occupies residues 1–344; sequence MASTMMNYQD…RRYNPAAPLP (344 aa). Residues Asp108 and Asp112 each coordinate Mg(2+). Substrate contacts are provided by residues Asp108, Asp112, 198 to 201, 246 to 250, and 336 to 337; these read RHYD, SWDKE, and RY. The DDXXD signature appears at 108 to 112; the sequence is DDLTD. Positions 345-744 are prenyltransferase; that stretch reads RREDIGKVNG…LHLITFQLKV (400 aa). The disordered stretch occupies residues 399–422; the sequence is YTTMTPAETSSDDKKKKAKASHET. The span at 409–422 shows a compositional bias: basic and acidic residues; that stretch reads SDDKKKKAKASHET. Positions 459 and 488 each coordinate isopentenyl diphosphate. Mg(2+) contacts are provided by Asp495 and Asp499. Residues 495–499 carry the DDXXD motif; the sequence is DDVQD. Position 504 (Arg504) interacts with dimethylallyl diphosphate. Isopentenyl diphosphate is bound at residue Arg505. Positions 581, 582, and 617 each coordinate dimethylallyl diphosphate.

In the N-terminal section; belongs to the terpene synthase family. It in the C-terminal section; belongs to the FPP/GGPP synthase family. In terms of assembly, hexamer. Requires Mg(2+) as cofactor.

It carries out the reaction isopentenyl diphosphate + (2E,6E)-farnesyl diphosphate = (2E,6E,10E)-geranylgeranyl diphosphate + diphosphate. The enzyme catalyses (2E,6E,10E)-geranylgeranyl diphosphate = (5R,12R,14S)-dolasta-1(15),8-diene + diphosphate. It catalyses the reaction (2E,6E,10E)-geranylgeranyl diphosphate = delta-araneosene + diphosphate. Functionally, bifunctional terpene synthase involved in the biosynthesis of the diterpenes delta-araneosene and dolasta-1(15),8-diene. The C-terminal prenyltransferase domain of CgDS catalyzes formation of the universal precursor of diterpene, geranylgeranyl diphosphate (GGPP), whereas the N-terminal terpene cyclase domain catalyzes the cyclization of GGPP to the intermediate delta-araneosene that is further converted to dolasta-1(15),8-diene in a second cyclization event. In some cases the cyclization stops at the delta-araneosene stage. The chain is Dolasta-1(15),8-diene synthase from Colletotrichum gloeosporioides (Anthracnose fungus).